Here is a 513-residue protein sequence, read N- to C-terminus: ATP synthase subunit alpha (513 aa).

Position 169–176 (169–176 (GDRQTGKT)) interacts with ATP.

The protein belongs to the ATPase alpha/beta chains family. As to quaternary structure, F-type ATPases have 2 components, CF(1) - the catalytic core - and CF(0) - the membrane proton channel. CF(1) has five subunits: alpha(3), beta(3), gamma(1), delta(1), epsilon(1). CF(0) has three main subunits: a(1), b(2) and c(9-12). The alpha and beta chains form an alternating ring which encloses part of the gamma chain. CF(1) is attached to CF(0) by a central stalk formed by the gamma and epsilon chains, while a peripheral stalk is formed by the delta and b chains.

It is found in the cell inner membrane. The enzyme catalyses ATP + H2O + 4 H(+)(in) = ADP + phosphate + 5 H(+)(out). Functionally, produces ATP from ADP in the presence of a proton gradient across the membrane. The alpha chain is a regulatory subunit. In Mannheimia succiniciproducens (strain KCTC 0769BP / MBEL55E), this protein is ATP synthase subunit alpha.